A 514-amino-acid polypeptide reads, in one-letter code: Sugar transport protein 3 (514 aa).

At 1–19 (MVAEEARKEAMAKSVSGGK) the chain is on the cytoplasmic side. Transmembrane regions (helical) follow at residues 20 to 40 (ITYF…IFGY), 87 to 107 (LLTS…LLAS), 124 to 144 (VSFL…MLII), 147 to 167 (LLLG…LSEM), 174 to 194 (GAIS…ANVI), 207 to 227 (ISLA…LFLP), 289 to 309 (LVMA…VVAF), 327 to 347 (MSTL…MLVV), 356 to 376 (FLIG…IVMV), 392 to 412 (VVVL…PLGW), 430 to 450 (VTVA…PPML), and 456 to 476 (GIFF…QLFL). Topologically, residues 477–514 (PETKNVPIEKVVGLWEKHWFWRRMTSKRDIQETTILSH) are cytoplasmic.

It belongs to the major facilitator superfamily. Sugar transporter (TC 2.A.1.1) family.

It localises to the membrane. In terms of biological role, mediates an active uptake of hexoses, probably by sugar/hydrogen symport. The sequence is that of Sugar transport protein 3 (STP3) from Arabidopsis thaliana (Mouse-ear cress).